The chain runs to 353 residues: Adenine deaminase (353 aa).

Zn(2+) contacts are provided by H19, H21, and H208. Residue E211 is the Proton donor of the active site. Zn(2+) is bound at residue D289. Residue D290 participates in substrate binding.

The protein belongs to the metallo-dependent hydrolases superfamily. Adenosine and AMP deaminases family. Adenine deaminase type 2 subfamily. The cofactor is Zn(2+).

It is found in the cytoplasm. The protein localises to the nucleus. The enzyme catalyses adenine + H2O + H(+) = hypoxanthine + NH4(+). Catalyzes the hydrolytic deamination of adenine to hypoxanthine. Plays an important role in the purine salvage pathway and in nitrogen catabolism. This Gibberella zeae (strain ATCC MYA-4620 / CBS 123657 / FGSC 9075 / NRRL 31084 / PH-1) (Wheat head blight fungus) protein is Adenine deaminase.